The primary structure comprises 319 residues: tRNA dimethylallyltransferase (319 aa).

G15–S22 contributes to the ATP binding site. T17–S22 serves as a coordination point for substrate. Interaction with substrate tRNA stretches follow at residues D40–Q43 and Q164–R168.

This sequence belongs to the IPP transferase family. As to quaternary structure, monomer. Requires Mg(2+) as cofactor.

The enzyme catalyses adenosine(37) in tRNA + dimethylallyl diphosphate = N(6)-dimethylallyladenosine(37) in tRNA + diphosphate. In terms of biological role, catalyzes the transfer of a dimethylallyl group onto the adenine at position 37 in tRNAs that read codons beginning with uridine, leading to the formation of N6-(dimethylallyl)adenosine (i(6)A). This Chlorobium phaeobacteroides (strain DSM 266 / SMG 266 / 2430) protein is tRNA dimethylallyltransferase.